Consider the following 635-residue polypeptide: MTDQKHPLLAGLQDATPLANWSSTELSNAAVEIRDVLCNLLATRTAHFASNLGVVELCLALHSEFDFRTDRLIWDTGHQVYPHKLVTGRYDRFETIRTAGGLMGYPNPHESVYDLFMTGHAGCSVSTAVGLRSGDILMDQKDRRTVAVIGDGAFPCGVVFEALNNAGELGDDLTIILNDNKMSICHRTGSVAQYLDRLRGNPFYTGLKHEVTKLLDRVPMFGDPAERLLAQMKEGVKAGLLGGMLFEELGIRYIGPIDGHDIPLMQKYLRLCKETPGPVLLHVVTEKGHGYKPAAEDPVFFHTPPAFEDRGGTPVTRGSDGRPPYTTHARDAIGEAMKRDSRVTVITAAMCQGNKLEPVREQFPERFFDVGICESHAVAFAAGQCKTGMRPIVDIYSTFLQRSYDQIFQEVALQDLPVVFMMDRAGLTAPDGPTHHGVYDIGYMRLFPNLVLMAPGYAEELSMMLDKALTLDHPSGIRYPKASALEATHTPAPIEIGKAEWIREGTDGTIVAYGAMLEQAIAAAEQLEGELEIGVVNARFVKPIDAEMVHKTLSDGRFVVTLEEGTRVGGFGSAFLESAVDQRLDTRAVHRLALPDEFVLHGDRSQLLDQSTLSAQKIAEVCREAASEVGSQVGI.

Thiamine diphosphate is bound by residues histidine 78 and 119–121 (GHA). Aspartate 151 contributes to the Mg(2+) binding site. Thiamine diphosphate-binding positions include 152 to 153 (GA), asparagine 180, and tyrosine 291. Asparagine 180 serves as a coordination point for Mg(2+). A disordered region spans residues 305 to 325 (PAFEDRGGTPVTRGSDGRPPY). Glutamate 374 is a binding site for thiamine diphosphate.

The protein belongs to the transketolase family. DXPS subfamily. As to quaternary structure, homodimer. Mg(2+) serves as cofactor. It depends on thiamine diphosphate as a cofactor.

The enzyme catalyses D-glyceraldehyde 3-phosphate + pyruvate + H(+) = 1-deoxy-D-xylulose 5-phosphate + CO2. It participates in metabolic intermediate biosynthesis; 1-deoxy-D-xylulose 5-phosphate biosynthesis; 1-deoxy-D-xylulose 5-phosphate from D-glyceraldehyde 3-phosphate and pyruvate: step 1/1. Its function is as follows. Catalyzes the acyloin condensation reaction between C atoms 2 and 3 of pyruvate and glyceraldehyde 3-phosphate to yield 1-deoxy-D-xylulose-5-phosphate (DXP). The sequence is that of 1-deoxy-D-xylulose-5-phosphate synthase from Rhodopirellula baltica (strain DSM 10527 / NCIMB 13988 / SH1).